We begin with the raw amino-acid sequence, 491 residues long: Protein nucleotidyltransferase YdiU (491 aa).

ATP-binding residues include Gly94, Gly96, Arg97, Lys117, Asp129, Gly130, Arg180, and Arg187. Asp256 acts as the Proton acceptor in catalysis. 2 residues coordinate Mg(2+): Asn257 and Asp266. Asp266 contributes to the ATP binding site.

Belongs to the SELO family. Requires Mg(2+) as cofactor. Mn(2+) serves as cofactor.

The enzyme catalyses L-seryl-[protein] + ATP = 3-O-(5'-adenylyl)-L-seryl-[protein] + diphosphate. The catalysed reaction is L-threonyl-[protein] + ATP = 3-O-(5'-adenylyl)-L-threonyl-[protein] + diphosphate. It carries out the reaction L-tyrosyl-[protein] + ATP = O-(5'-adenylyl)-L-tyrosyl-[protein] + diphosphate. It catalyses the reaction L-histidyl-[protein] + UTP = N(tele)-(5'-uridylyl)-L-histidyl-[protein] + diphosphate. The enzyme catalyses L-seryl-[protein] + UTP = O-(5'-uridylyl)-L-seryl-[protein] + diphosphate. The catalysed reaction is L-tyrosyl-[protein] + UTP = O-(5'-uridylyl)-L-tyrosyl-[protein] + diphosphate. In terms of biological role, nucleotidyltransferase involved in the post-translational modification of proteins. It can catalyze the addition of adenosine monophosphate (AMP) or uridine monophosphate (UMP) to a protein, resulting in modifications known as AMPylation and UMPylation. The polypeptide is Protein nucleotidyltransferase YdiU (Clostridium botulinum (strain Alaska E43 / Type E3)).